Reading from the N-terminus, the 256-residue chain is tRNA pseudouridine synthase A (256 aa).

D52 serves as the catalytic Nucleophile. Residue Y111 coordinates substrate.

It belongs to the tRNA pseudouridine synthase TruA family. Homodimer.

It catalyses the reaction uridine(38/39/40) in tRNA = pseudouridine(38/39/40) in tRNA. In terms of biological role, formation of pseudouridine at positions 38, 39 and 40 in the anticodon stem and loop of transfer RNAs. The protein is tRNA pseudouridine synthase A of Paramagnetospirillum magneticum (strain ATCC 700264 / AMB-1) (Magnetospirillum magneticum).